The chain runs to 1649 residues: DNA-directed RNA polymerase subunit beta' (1649 aa).

4 residues coordinate Zn(2+): C62, C64, C77, and C80. D746, D748, and D750 together coordinate Mg(2+). Residues C1077, C1268, C1275, and C1278 each contribute to the Zn(2+) site.

Belongs to the RNA polymerase beta' chain family. The RNAP catalytic core consists of 2 alpha, 1 beta, 1 beta' and 1 omega subunit. When a sigma factor is associated with the core the holoenzyme is formed, which can initiate transcription. Mg(2+) is required as a cofactor. Requires Zn(2+) as cofactor.

It catalyses the reaction RNA(n) + a ribonucleoside 5'-triphosphate = RNA(n+1) + diphosphate. Functionally, DNA-dependent RNA polymerase catalyzes the transcription of DNA into RNA using the four ribonucleoside triphosphates as substrates. In Thermosipho africanus (strain TCF52B), this protein is DNA-directed RNA polymerase subunit beta'.